A 369-amino-acid chain; its full sequence is Glutamate 5-kinase (369 aa).

Lys11 provides a ligand contact to ATP. Residues Ser51, Asp138, and Asn150 each contribute to the substrate site. Residues 170-171 (TD) and 212-218 (TGGMATK) contribute to the ATP site. A PUA domain is found at 277–355 (NGTIVIDDGA…QDIYAVLGYE (79 aa)).

The protein belongs to the glutamate 5-kinase family.

Its subcellular location is the cytoplasm. The enzyme catalyses L-glutamate + ATP = L-glutamyl 5-phosphate + ADP. The protein operates within amino-acid biosynthesis; L-proline biosynthesis; L-glutamate 5-semialdehyde from L-glutamate: step 1/2. Catalyzes the transfer of a phosphate group to glutamate to form L-glutamate 5-phosphate. The sequence is that of Glutamate 5-kinase from Aliivibrio salmonicida (strain LFI1238) (Vibrio salmonicida (strain LFI1238)).